Reading from the N-terminus, the 975-residue chain is Glycine dehydrogenase (decarboxylating) (975 aa).

N6-(pyridoxal phosphate)lysine is present on lysine 723.

The protein belongs to the GcvP family. As to quaternary structure, the glycine cleavage system is composed of four proteins: P, T, L and H. It depends on pyridoxal 5'-phosphate as a cofactor.

The enzyme catalyses N(6)-[(R)-lipoyl]-L-lysyl-[glycine-cleavage complex H protein] + glycine + H(+) = N(6)-[(R)-S(8)-aminomethyldihydrolipoyl]-L-lysyl-[glycine-cleavage complex H protein] + CO2. Its function is as follows. The glycine cleavage system catalyzes the degradation of glycine. The P protein binds the alpha-amino group of glycine through its pyridoxal phosphate cofactor; CO(2) is released and the remaining methylamine moiety is then transferred to the lipoamide cofactor of the H protein. This Burkholderia orbicola (strain MC0-3) protein is Glycine dehydrogenase (decarboxylating).